The following is a 385-amino-acid chain: Protein pelota homolog (385 aa).

Residue Lys-162 forms a Glycyl lysine isopeptide (Lys-Gly) (interchain with G-Cter in SUMO2) linkage. A phosphoserine mark is found at Ser-374, Ser-380, Ser-381, and Ser-382.

It belongs to the eukaryotic release factor 1 family. Pelota subfamily. Component of the Pelota-HBS1L complex, also named Dom34-Hbs1 complex, composed of PELO and HBS1L. Interacts with PINK1. Interacts with ABCE1. Interacts with CNOT4. The cofactor is a divalent metal cation. In terms of tissue distribution, ubiquitously expressed.

It is found in the cytoplasm. Functionally, component of the Pelota-HBS1L complex, a complex that recognizes stalled ribosomes and triggers the No-Go Decay (NGD) pathway. In the Pelota-HBS1L complex, PELO recognizes ribosomes stalled at the 3' end of an mRNA and engages stalled ribosomes by destabilizing mRNA in the mRNA channel. Following mRNA extraction from stalled ribosomes by the SKI complex, the Pelota-HBS1L complex promotes recruitment of ABCE1, which drives the disassembly of stalled ribosomes, followed by degradation of damaged mRNAs as part of the NGD pathway. As part of the PINK1-regulated signaling, upon mitochondrial damage is recruited to the ribosome/mRNA-ribonucleoprotein complex associated to mitochondrial outer membrane thereby enabling the recruitment of autophagy receptors and induction of mitophagy. The polypeptide is Protein pelota homolog (Mus musculus (Mouse)).